The chain runs to 600 residues: ATP-dependent ubiquitin transferase-like protein Cap2 (600 aa).

An E2-like domain region spans residues 1-158; the sequence is MSTVVQQVPA…QEKLATTGDA (158 aa). Catalysis depends on Cys109, which acts as the For E2-like domain. The tract at residues 159–373 is linker domain; that stretch reads VELPAFPDQS…DQLRTRGEAA (215 aa). Positions 375-600 are adenylation plus E1-like domain; that stretch reads DIRSKKVLII…GTVEKEPHEY (226 aa). Catalysis depends on Cys548, which acts as the For E1-like domain.

It in the C-terminal section; belongs to the HesA/MoeB/ThiF family. As to quaternary structure, crystallizes as a Cap2 homodimer bound on each side by a CdnD monomer.

In terms of biological role, CD-NTase priming component of a CBASS antiviral system. CBASS (cyclic oligonucleotide-based antiphage signaling system) provides immunity against bacteriophages. The CD-NTase protein (CdnD) synthesizes cyclic nucleotides in response to infection; these serve as specific second messenger signals. The signals activate a diverse range of effectors, leading to bacterial cell death and thus abortive phage infection. A type II-C(AAG) CBASS system. Primes CdnD; acts as a protein transferase, conjugating CdnD, the CD-NTase, to unidentified target(s) in the cell via an E1-E2 ubiquitin transferase-like mechanism. Upon phage infection CdnD activates and makes cyclic nucleotides. During the conjugation reaction CdnD is transiently attached to AMP. Protein conjugation requires ATP. Functionally, protects E.coli against phage T2 infection. When the cdnD-cap2-cap3-cap4 operon is introduced in E.coli there is a more than 10(3) decrease in the efficiency of T2 plaque formation. The operon does not protect against phage T5 and only about 10-fold against T7. In Enterobacter hormaechei subsp. hoffmannii (strain UCI 50), this protein is ATP-dependent ubiquitin transferase-like protein Cap2.